The following is a 120-amino-acid chain: Small ribosomal subunit protein uS13 (120 aa).

Residues 93–120 (RKGLPVRGQTTKNNARTRKGKKKTVGSK) are disordered. The span at 107–120 (ARTRKGKKKTVGSK) shows a compositional bias: basic residues.

This sequence belongs to the universal ribosomal protein uS13 family. Part of the 30S ribosomal subunit. Forms a loose heterodimer with protein S19. Forms two bridges to the 50S subunit in the 70S ribosome.

In terms of biological role, located at the top of the head of the 30S subunit, it contacts several helices of the 16S rRNA. In the 70S ribosome it contacts the 23S rRNA (bridge B1a) and protein L5 of the 50S subunit (bridge B1b), connecting the 2 subunits; these bridges are implicated in subunit movement. Contacts the tRNAs in the A and P-sites. In Helicobacter acinonychis (strain Sheeba), this protein is Small ribosomal subunit protein uS13.